The following is a 540-amino-acid chain: PTS system alpha-glucoside-specific EIICB component (540 aa).

In terms of domain architecture, PTS EIIC type-1 spans 1-420 (MLSQIQRFGG…LNLKTPGREE (420 aa)). 11 helical membrane-spanning segments follow: residues 12–32 (MFTP…AIML), 87–107 (ACLA…AMGM), 130–150 (IAGI…SGLV), 174–194 (FVVI…LLGW), 201–221 (IESL…VYIF), 225–245 (ILIP…GPAV), 277–297 (FALH…ALYF), 307–327 (VAGL…TEPL), 329–349 (FTFL…AATM), 352–372 (VMYI…QFLP), and 384–404 (SMMF…FVVF). The 83-residue stretch at 448 to 530 (LGQAAGFLQA…ENLMKDSLST (83 aa)) folds into the PTS EIIB type-1 domain. Cys470 acts as the Phosphocysteine intermediate; for EIIB activity in catalysis.

The protein localises to the cell membrane. The phosphoenolpyruvate-dependent sugar phosphotransferase system (sugar PTS), a major carbohydrate active -transport system, catalyzes the phosphorylation of incoming sugar substrates concomitantly with their translocation across the cell membrane. This system is involved in alpha-glucoside transport. In terms of biological role, involved in the transport and simultaneous phosphorylation at O-6 of the glucosyl moiety of sucrose and its five linkage-isomeric alpha-D-glucosyl-D-fructoses. Can also transport maltose, isomaltose and maltitol, phosphorylating at O-6 of their non-reducing glucose portion. This is PTS system alpha-glucoside-specific EIICB component (aglA) from Klebsiella pneumoniae.